We begin with the raw amino-acid sequence, 367 residues long: D-alanine--D-alanine ligase (367 aa).

The ATP-grasp domain maps to 141 to 346; sequence KNLFAQAGLR…YPELIERLIA (206 aa). Position 174–229 (174–229) interacts with ATP; it reads ERELGYPCFVKPANAGSSVGISKCKQRGDLKAAFIEAFQYDRKIIIEEAIVGREIE. Mg(2+) contacts are provided by aspartate 300, glutamate 313, and asparagine 315.

Belongs to the D-alanine--D-alanine ligase family. Mg(2+) is required as a cofactor. Mn(2+) serves as cofactor.

It localises to the cytoplasm. The enzyme catalyses 2 D-alanine + ATP = D-alanyl-D-alanine + ADP + phosphate + H(+). Its pathway is cell wall biogenesis; peptidoglycan biosynthesis. Functionally, cell wall formation. The protein is D-alanine--D-alanine ligase of Geobacillus kaustophilus (strain HTA426).